Here is a 362-residue protein sequence, read N- to C-terminus: tRNA/tmRNA (uracil-C(5))-methyltransferase (362 aa).

S-adenosyl-L-methionine is bound by residues glutamine 182, tyrosine 210, asparagine 215, glutamate 231, and aspartate 293. Cysteine 318 functions as the Nucleophile in the catalytic mechanism. Glutamate 352 (proton acceptor) is an active-site residue.

It belongs to the class I-like SAM-binding methyltransferase superfamily. RNA M5U methyltransferase family. TrmA subfamily.

It catalyses the reaction uridine(54) in tRNA + S-adenosyl-L-methionine = 5-methyluridine(54) in tRNA + S-adenosyl-L-homocysteine + H(+). It carries out the reaction uridine(341) in tmRNA + S-adenosyl-L-methionine = 5-methyluridine(341) in tmRNA + S-adenosyl-L-homocysteine + H(+). Functionally, dual-specificity methyltransferase that catalyzes the formation of 5-methyluridine at position 54 (m5U54) in all tRNAs, and that of position 341 (m5U341) in tmRNA (transfer-mRNA). The polypeptide is tRNA/tmRNA (uracil-C(5))-methyltransferase (Neisseria meningitidis serogroup A / serotype 4A (strain DSM 15465 / Z2491)).